The chain runs to 607 residues: MNLEELKKRQEKIRNFSIIAHIDHGKSTLADRILEKTETVSSREMQAQLLDSMDLERERGITIKLNAIELNYTAKDGETYIFHLIDTPGHVDFTYEVSRSLAACEGAILVVDAAQGIEAQTLANVYLALDNDLEIMPIINKIDLPAADPERVRTEIEDVIGLDASEAVLASAKAGIGIEEILEQIVEKVPAPTGDVTAPLKALIFDSVYDAYRGVILQVRVMDGVVKPGDKIQLMSNSKTFDVAEVGIFTPKAVGRDFLATGDVGYIAASIKTVQDTRVGDTVTLATNPAAEPLHGYKQMNPMVFAGLYPIESNKYNDLREALEKLQLNDASLQFEPETSQALGFGFRCGFLGLLHMDVIQERLEREFNIDLIMTAPSVIYKVNLTDGESMDVSNPSEFPDPTKIATIEEPYVKAQIMVPQEFVGAVMELAQRKRGDFVTMDYIDDNRVNVIYQIPLAEIVFDFFDKLKSSTRGYASFDYELSEYRPSKLVKMDILLNGDKVDALSFIVHKDFAYERGKLIVDKLKKIIPRQQFEVPIQAAIGHKIVARTDIKALRKNVLAKCYGGDVSRKRKLLEKQKAGKKRMKSIGSVEVPQEAFLSVLSMDEE.

The 183-residue stretch at 11 to 193 folds into the tr-type G domain; sequence EKIRNFSIIA…QIVEKVPAPT (183 aa). GTP is bound by residues 23–28 and 140–143; these read DHGKST and NKID.

It belongs to the TRAFAC class translation factor GTPase superfamily. Classic translation factor GTPase family. LepA subfamily.

The protein localises to the cell membrane. It catalyses the reaction GTP + H2O = GDP + phosphate + H(+). Its function is as follows. Required for accurate and efficient protein synthesis under certain stress conditions. May act as a fidelity factor of the translation reaction, by catalyzing a one-codon backward translocation of tRNAs on improperly translocated ribosomes. Back-translocation proceeds from a post-translocation (POST) complex to a pre-translocation (PRE) complex, thus giving elongation factor G a second chance to translocate the tRNAs correctly. Binds to ribosomes in a GTP-dependent manner. The polypeptide is Elongation factor 4 (Streptococcus pneumoniae serotype 19F (strain G54)).